Consider the following 226-residue polypeptide: MSSQTPVVTVDGPSGAGKGTLCMLLSKKLGFQLLDSGAIYRVLALAAIHHGVDTESEDALVPLATHLDVQFVAEGDLVKVILEGEDVSKELRKEETGMAASKVAALPRVREALLRRQRAFEAAPGLVADGRDMGTVVFPNAKAKIFLDASAEERAHRRLKQLQDKGLDVRFDDLLSEIQERDDRDRNRPVAPLRPAEDALVLDSTSMSIDEVVEKALQYIESKLAE.

An ATP-binding site is contributed by 12 to 20 (GPSGAGKGT).

Belongs to the cytidylate kinase family. Type 1 subfamily.

Its subcellular location is the cytoplasm. The catalysed reaction is CMP + ATP = CDP + ADP. It catalyses the reaction dCMP + ATP = dCDP + ADP. This is Cytidylate kinase from Vibrio vulnificus (strain CMCP6).